The sequence spans 457 residues: UDP-N-acetylmuramoylalanine--D-glutamate ligase (457 aa).

126–132 lines the ATP pocket; sequence GTAGKGS.

The protein belongs to the MurCDEF family.

It is found in the cytoplasm. It carries out the reaction UDP-N-acetyl-alpha-D-muramoyl-L-alanine + D-glutamate + ATP = UDP-N-acetyl-alpha-D-muramoyl-L-alanyl-D-glutamate + ADP + phosphate + H(+). It functions in the pathway cell wall biogenesis; peptidoglycan biosynthesis. Functionally, cell wall formation. Catalyzes the addition of glutamate to the nucleotide precursor UDP-N-acetylmuramoyl-L-alanine (UMA). This is UDP-N-acetylmuramoylalanine--D-glutamate ligase from Deinococcus radiodurans (strain ATCC 13939 / DSM 20539 / JCM 16871 / CCUG 27074 / LMG 4051 / NBRC 15346 / NCIMB 9279 / VKM B-1422 / R1).